Reading from the N-terminus, the 349-residue chain is Fructose-1,6-bisphosphatase class 1 (349 aa).

Positions 113, 135, 137, and 138 each coordinate Mg(2+). Substrate contacts are provided by residues 138–141 (DGSS), N230, Y258, and K288. A Mg(2+)-binding site is contributed by E294.

Belongs to the FBPase class 1 family. In terms of assembly, homotetramer. It depends on Mg(2+) as a cofactor.

The protein localises to the cytoplasm. It catalyses the reaction beta-D-fructose 1,6-bisphosphate + H2O = beta-D-fructose 6-phosphate + phosphate. The protein operates within carbohydrate biosynthesis; Calvin cycle. The chain is Fructose-1,6-bisphosphatase class 1 from Trichormus variabilis (strain ATCC 29413 / PCC 7937) (Anabaena variabilis).